The chain runs to 130 residues: MLRRTVSNFAMSPYMLFISDLAKTGKLKGIRTPGKFVGKKYRQLSAKEKAALQQRAKQASTPAMTAYRRMAHREMSNKSVPIEQRRANLTKKWNETKQAQREKAQKAQKKTKSAKSKVKKAAKKSKKSKK.

A propeptide spanning residues 1–10 (MLRRTVSNFA) is cleaved from the precursor. The tract at residues 89–130 (LTKKWNETKQAQREKAQKAQKKTKSAKSKVKKAAKKSKKSKK) is disordered. Over residues 92–105 (KWNETKQAQREKAQ) the composition is skewed to basic and acidic residues. The segment covering 106–130 (KAQKKTKSAKSKVKKAAKKSKKSKK) has biased composition (basic residues).

Belongs to the KAP family. As to quaternary structure, associates with the kinetoplast DNA network.

Its subcellular location is the mitochondrion matrix. It localises to the kinetoplast. Functionally, histone H1-like DNA-binding protein involved in the organization and segregation of kinetoplast DNA (kDNA). The mitochondrial DNA of kinetoplastid protozoa consists of about 5,000 minicircles and 20 to 30 maxicircles. These circular DNAs are held together by catenation into a highly organized compact disk structure referred to as a kinetoplast DNA (kDNA) network. Binds preferentially to a specific fragment of minicircle DNA and is able to compact kDNA networks through DNA charge neutralization and condensation. This chain is kinetoplast-associated protein 2-1 (KAP2-1), found in Crithidia fasciculata.